The primary structure comprises 469 residues: Protein C-ets-2 (469 aa).

The region spanning Ala85 to Asn170 is the PNT domain. A phosphoserine mark is found at Ser220 and Ser225. Residues Asn264–Ser289 are disordered. A phosphoserine mark is found at Ser295, Ser298, and Ser301. The segment at residues Ile363–Val443 is a DNA-binding region (ETS).

This sequence belongs to the ETS family. Post-translationally, phosphorylation by CDK10 at Ser-220 and Ser-225 creates a phosphodegron that targets ETS2 for proteasomal degradation.

It localises to the nucleus. Functionally, transcription factor activating transcription. Binds specifically the DNA GGAA/T core motif (Ets-binding site or EBS) in gene promoters and stimulates transcription. This Homo sapiens (Human) protein is Protein C-ets-2 (ETS2).